A 590-amino-acid polypeptide reads, in one-letter code: Aspartate--tRNA(Asp/Asn) ligase (590 aa).

E175 serves as a coordination point for L-aspartate. Positions 199–202 are aspartate; that stretch reads QQYK. Residues R221 and H450 each contribute to the L-aspartate site. 221–223 is a binding site for ATP; it reads RDE. ATP is bound at residue E484. R491 serves as a coordination point for L-aspartate. Position 536 to 539 (536 to 539) interacts with ATP; that stretch reads GVDR.

The protein belongs to the class-II aminoacyl-tRNA synthetase family. Type 1 subfamily. In terms of assembly, homodimer.

It localises to the cytoplasm. The enzyme catalyses tRNA(Asx) + L-aspartate + ATP = L-aspartyl-tRNA(Asx) + AMP + diphosphate. Aspartyl-tRNA synthetase with relaxed tRNA specificity since it is able to aspartylate not only its cognate tRNA(Asp) but also tRNA(Asn). Reaction proceeds in two steps: L-aspartate is first activated by ATP to form Asp-AMP and then transferred to the acceptor end of tRNA(Asp/Asn). This Rhodopseudomonas palustris (strain BisA53) protein is Aspartate--tRNA(Asp/Asn) ligase.